Here is a 361-residue protein sequence, read N- to C-terminus: UDP-N-acetylglucosamine--N-acetylmuramyl-(pentapeptide) pyrophosphoryl-undecaprenol N-acetylglucosamine transferase (361 aa).

Residues 11-13, asparagine 124, arginine 162, serine 193, and glutamine 292 contribute to the UDP-N-acetyl-alpha-D-glucosamine site; that span reads TGG.

Belongs to the glycosyltransferase 28 family. MurG subfamily.

It localises to the cell inner membrane. The catalysed reaction is di-trans,octa-cis-undecaprenyl diphospho-N-acetyl-alpha-D-muramoyl-L-alanyl-D-glutamyl-meso-2,6-diaminopimeloyl-D-alanyl-D-alanine + UDP-N-acetyl-alpha-D-glucosamine = di-trans,octa-cis-undecaprenyl diphospho-[N-acetyl-alpha-D-glucosaminyl-(1-&gt;4)]-N-acetyl-alpha-D-muramoyl-L-alanyl-D-glutamyl-meso-2,6-diaminopimeloyl-D-alanyl-D-alanine + UDP + H(+). Its pathway is cell wall biogenesis; peptidoglycan biosynthesis. Functionally, cell wall formation. Catalyzes the transfer of a GlcNAc subunit on undecaprenyl-pyrophosphoryl-MurNAc-pentapeptide (lipid intermediate I) to form undecaprenyl-pyrophosphoryl-MurNAc-(pentapeptide)GlcNAc (lipid intermediate II). This Elusimicrobium minutum (strain Pei191) protein is UDP-N-acetylglucosamine--N-acetylmuramyl-(pentapeptide) pyrophosphoryl-undecaprenol N-acetylglucosamine transferase.